Here is an 85-residue protein sequence, read N- to C-terminus: Large ribosomal subunit protein bL27 (85 aa).

The segment at 1–21 is disordered; it reads MAHKKAGGSTRNGRDSNAQRL. Over residues 9–19 the composition is skewed to polar residues; sequence STRNGRDSNAQ.

Belongs to the bacterial ribosomal protein bL27 family.

The polypeptide is Large ribosomal subunit protein bL27 (Pectobacterium atrosepticum (strain SCRI 1043 / ATCC BAA-672) (Erwinia carotovora subsp. atroseptica)).